Here is a 1345-residue protein sequence, read N- to C-terminus: Protein dispatched homolog 2 (1345 aa).

A disordered region spans residues 1–28 (MAPEASPERSCSLHTCPLEDPTGAPVPP). The helical transmembrane segment at 125 to 145 (VAVIVGCLAFIFLCTLAGLLG) threads the bilayer. N-linked (GlcNAc...) asparagine glycosylation is found at Asn-304 and Asn-420. Residues 429–598 (LGLKPRLLKY…LLWLPATVVL (170 aa)) form the SSD domain. The next 6 helical transmembrane spans lie at 440-460 (LAED…GMSL), 465-485 (LFIT…AYFL), 497-517 (FVNL…TLIF), 544-564 (FGYL…GSYL), 572-592 (CFAL…LLWL), and 659-679 (YIWI…GGVS). The N-linked (GlcNAc...) asparagine glycan is linked to Asn-776. 5 helical membrane-spanning segments follow: residues 919-939 (PAVV…LSTW), 945-965 (LFSV…LVLL), 974-994 (ALFL…YCIS), 1019-1039 (AMTT…TILL), and 1043-1063 (LGII…FFFQ). 2 disordered regions span residues 1251 to 1271 (VRVP…GHPI) and 1295 to 1345 (PNMP…GYSS). The segment covering 1297–1306 (MPNSHHSSLS) has biased composition (polar residues). Position 1310 is an omega-N-methylarginine (Arg-1310).

This sequence belongs to the dispatched family.

The protein localises to the membrane. This is Protein dispatched homolog 2 (Disp2) from Mus musculus (Mouse).